Reading from the N-terminus, the 452-residue chain is Bifunctional protein GlmU (452 aa).

The interval 1-226 (MSLAVVILAA…GWEVDGVNDR (226 aa)) is pyrophosphorylase. UDP-N-acetyl-alpha-D-glucosamine is bound by residues 8-11 (LAAG), Lys22, Gln73, 78-79 (GT), 99-101 (YGD), Gly136, Glu151, Asn166, and Asn224. Residue Asp101 coordinates Mg(2+). Asn224 contributes to the Mg(2+) binding site. Residues 227–247 (VQLARLERIYQQAQAETLMRD) form a linker region. The tract at residues 248–452 (GVTLLDPSRL…VANWQRPKKG (205 aa)) is N-acetyltransferase. UDP-N-acetyl-alpha-D-glucosamine contacts are provided by Arg330 and Lys348. His360 acts as the Proton acceptor in catalysis. UDP-N-acetyl-alpha-D-glucosamine-binding residues include Tyr363 and Asn374. Residues Ala377, 383-384 (NY), Ser402, Ala420, and Arg437 contribute to the acetyl-CoA site.

The protein in the N-terminal section; belongs to the N-acetylglucosamine-1-phosphate uridyltransferase family. This sequence in the C-terminal section; belongs to the transferase hexapeptide repeat family. In terms of assembly, homotrimer. Mg(2+) serves as cofactor.

It is found in the cytoplasm. It carries out the reaction alpha-D-glucosamine 1-phosphate + acetyl-CoA = N-acetyl-alpha-D-glucosamine 1-phosphate + CoA + H(+). The enzyme catalyses N-acetyl-alpha-D-glucosamine 1-phosphate + UTP + H(+) = UDP-N-acetyl-alpha-D-glucosamine + diphosphate. It functions in the pathway nucleotide-sugar biosynthesis; UDP-N-acetyl-alpha-D-glucosamine biosynthesis; N-acetyl-alpha-D-glucosamine 1-phosphate from alpha-D-glucosamine 6-phosphate (route II): step 2/2. The protein operates within nucleotide-sugar biosynthesis; UDP-N-acetyl-alpha-D-glucosamine biosynthesis; UDP-N-acetyl-alpha-D-glucosamine from N-acetyl-alpha-D-glucosamine 1-phosphate: step 1/1. It participates in bacterial outer membrane biogenesis; LPS lipid A biosynthesis. Its function is as follows. Catalyzes the last two sequential reactions in the de novo biosynthetic pathway for UDP-N-acetylglucosamine (UDP-GlcNAc). The C-terminal domain catalyzes the transfer of acetyl group from acetyl coenzyme A to glucosamine-1-phosphate (GlcN-1-P) to produce N-acetylglucosamine-1-phosphate (GlcNAc-1-P), which is converted into UDP-GlcNAc by the transfer of uridine 5-monophosphate (from uridine 5-triphosphate), a reaction catalyzed by the N-terminal domain. The polypeptide is Bifunctional protein GlmU (Alcanivorax borkumensis (strain ATCC 700651 / DSM 11573 / NCIMB 13689 / SK2)).